A 157-amino-acid chain; its full sequence is SsrA-binding protein (157 aa).

The segment at 128–157 (LARGKKQHDKRAAEKERDWEREKQRVMRRG) is disordered. The span at 137–157 (KRAAEKERDWEREKQRVMRRG) shows a compositional bias: basic and acidic residues.

Belongs to the SmpB family.

Its subcellular location is the cytoplasm. Its function is as follows. Required for rescue of stalled ribosomes mediated by trans-translation. Binds to transfer-messenger RNA (tmRNA), required for stable association of tmRNA with ribosomes. tmRNA and SmpB together mimic tRNA shape, replacing the anticodon stem-loop with SmpB. tmRNA is encoded by the ssrA gene; the 2 termini fold to resemble tRNA(Ala) and it encodes a 'tag peptide', a short internal open reading frame. During trans-translation Ala-aminoacylated tmRNA acts like a tRNA, entering the A-site of stalled ribosomes, displacing the stalled mRNA. The ribosome then switches to translate the ORF on the tmRNA; the nascent peptide is terminated with the 'tag peptide' encoded by the tmRNA and targeted for degradation. The ribosome is freed to recommence translation, which seems to be the essential function of trans-translation. The protein is SsrA-binding protein of Methylococcus capsulatus (strain ATCC 33009 / NCIMB 11132 / Bath).